The sequence spans 94 residues: Ig kappa-B5 chain V region 2699 (94 aa).

Residues 1 to 23 (AFELTQTPSSVEAAVGGTVTINC) are framework-1. Residues 24 to 34 (QASTDISSNLA) form a complementarity-determining-1 region. The tract at residues 35–49 (WYTPKPGSPPKLLIY) is framework-2. Positions 50 to 56 (SASTLAS) are complementarity-determining-2. The interval 57-82 (GVSSRFKGSGSGVLITLTISDLECGV) is framework-3. A region of interest (complementarity-determining-3) is located at residue serine 83. The segment at 84–93 (FGGGTKVVVE) is framework-4.

This Oryctolagus cuniculus (Rabbit) protein is Ig kappa-B5 chain V region 2699.